The sequence spans 245 residues: MADS-box transcription factor 55 (245 aa).

Positions methionine 1 to asparagine 61 constitute an MADS-box domain. In terms of domain architecture, K-box spans leucine 109–alanine 199. The disordered stretch occupies residues proline 197 to proline 245. Residues aspartate 213–leucine 224 show a composition bias toward polar residues.

In terms of tissue distribution, expressed in roots, shoots and developing panicles. Expressed in shoots.

The protein localises to the nucleus. Functionally, transcription factor that acts as a negative regulator of brassinosteroid signaling. The sequence is that of MADS-box transcription factor 55 (MADS55) from Oryza sativa subsp. japonica (Rice).